We begin with the raw amino-acid sequence, 149 residues long: Probable ubiquitin-conjugating enzyme E2 12 (149 aa).

A compositionally biased stretch (basic and acidic residues) spans 1–15; sequence MASKRISRELRDMQR. A disordered region spans residues 1–22; that stretch reads MASKRISRELRDMQRHPPANCS. The 148-residue stretch at 1-148 folds into the UBC core domain; sequence MASKRISREL…AQKWTQKYAM (148 aa). The active-site Glycyl thioester intermediate is the Cys86.

The protein belongs to the ubiquitin-conjugating enzyme family. Ubiquitously expressed at very low levels.

It carries out the reaction S-ubiquitinyl-[E1 ubiquitin-activating enzyme]-L-cysteine + [E2 ubiquitin-conjugating enzyme]-L-cysteine = [E1 ubiquitin-activating enzyme]-L-cysteine + S-ubiquitinyl-[E2 ubiquitin-conjugating enzyme]-L-cysteine.. The protein operates within protein modification; protein ubiquitination. Functionally, accepts the ubiquitin from the E1 complex and catalyzes its covalent attachment to other proteins. This Arabidopsis thaliana (Mouse-ear cress) protein is Probable ubiquitin-conjugating enzyme E2 12 (UBC12).